Reading from the N-terminus, the 268-residue chain is Cytochrome c oxidase subunit 3 (268 aa).

A run of 7 helical transmembrane segments spans residues 23-43 (ILVSFSVMSIMLTLVFNMHGF), 49-69 (WVVFSAIVAIMTMALWFRDII), 88-108 (IGFILFVVSELFFFIAIFWAF), 141-161 (TILLLCSGATLTWSHHALLGG), 166-186 (TLLGLILTIALAVTFMICQYM), 203-223 (VFYFGTGFHGLHIIIGIIMLG), and 246-266 (ILYYHFVDVVWLFLYIVFYWW).

The protein belongs to the cytochrome c oxidase subunit 3 family. Component of the cytochrome c oxidase (complex IV, CIV), a multisubunit enzyme composed of a catalytic core of 3 subunits and several supernumerary subunits. The complex exists as a monomer or a dimer and forms supercomplexes (SCs) in the inner mitochondrial membrane with ubiquinol-cytochrome c oxidoreductase (cytochrome b-c1 complex, complex III, CIII).

It is found in the mitochondrion inner membrane. It carries out the reaction 4 Fe(II)-[cytochrome c] + O2 + 8 H(+)(in) = 4 Fe(III)-[cytochrome c] + 2 H2O + 4 H(+)(out). Its function is as follows. Component of the cytochrome c oxidase, the last enzyme in the mitochondrial electron transport chain which drives oxidative phosphorylation. The respiratory chain contains 3 multisubunit complexes succinate dehydrogenase (complex II, CII), ubiquinol-cytochrome c oxidoreductase (cytochrome b-c1 complex, complex III, CIII) and cytochrome c oxidase (complex IV, CIV), that cooperate to transfer electrons derived from NADH and succinate to molecular oxygen, creating an electrochemical gradient over the inner membrane that drives transmembrane transport and the ATP synthase. Cytochrome c oxidase is the component of the respiratory chain that catalyzes the reduction of oxygen to water. Electrons originating from reduced cytochrome c in the intermembrane space (IMS) are transferred via the dinuclear copper A center (CU(A)) of subunit 2 and heme A of subunit 1 to the active site in subunit 1, a binuclear center (BNC) formed by heme A3 and copper B (CU(B)). The BNC reduces molecular oxygen to 2 water molecules using 4 electrons from cytochrome c in the IMS and 4 protons from the mitochondrial matrix. The chain is Cytochrome c oxidase subunit 3 (COX3) from Yarrowia lipolytica (strain CLIB 122 / E 150) (Yeast).